The sequence spans 327 residues: COP9 signalosome complex subunit 6 (327 aa).

Residues 41 to 174 (VALHPLVILN…VSVFESVIDI (134 aa)) enclose the MPN domain. The interval 211–327 (SGENSTVAEH…IGRRMRGLFF (117 aa)) is interaction with Vpr.

It belongs to the peptidase M67A family. CSN6 subfamily. Component of the CSN complex, composed of COPS1/GPS1, COPS2, COPS3, COPS4, COPS5, COPS6, COPS7 (COPS7A or COPS7B), COPS8 and COPS9 isoform 1. In the complex, it probably interacts directly with COPS2, COPS4, COPS5, COPS7 (COPS7A or COPS7B) and COPS9 isoform 1. Interacts with the translation initiation factor EIF3S6. Interacts weakly with RBX1. Directly interacts with COP1 and 14-3-3 protein sigma/SFN. Interacts with ERCC6. As to quaternary structure, (Microbial infection) Interacts with the HIV-1 protein Vpr. Widely expressed.

It localises to the nucleus. The protein resides in the cytoplasm. Its subcellular location is the perinuclear region. Functionally, component of the COP9 signalosome complex (CSN), a complex involved in various cellular and developmental processes. The CSN complex is an essential regulator of the ubiquitin (Ubl) conjugation pathway by mediating the deneddylation of the cullin subunits of SCF-type E3 ligase complexes, leading to decrease the Ubl ligase activity of SCF-type complexes such as SCF, CSA or DDB2. The complex is also involved in phosphorylation of p53/TP53, c-jun/JUN, IkappaBalpha/NFKBIA, ITPK1 and IRF8, possibly via its association with CK2 and PKD kinases. CSN-dependent phosphorylation of TP53 and JUN promotes and protects degradation by the Ubl system, respectively. Has some glucocorticoid receptor-responsive activity. Stabilizes COP1 through reducing COP1 auto-ubiquitination and decelerating COP1 turnover rate, hence regulates the ubiquitination of COP1 targets. The protein is COP9 signalosome complex subunit 6 (COPS6) of Homo sapiens (Human).